Reading from the N-terminus, the 610-residue chain is L-galactono-1,4-lactone dehydrogenase, mitochondrial (610 aa).

The transit peptide at M1–L35 directs the protein to the mitochondrion. Residues T17–S61 form a disordered region. Residues S19–S30 show a composition bias toward low complexity. The propeptide at C36 to R101 is removed in mature form. Residues T43 to A58 are compositionally biased toward pro residues. Residues Y68–F84 traverse the membrane as a helical segment. An FAD-binding PCMH-type domain is found at T123–S258.

The cofactor is FAD.

The protein localises to the mitochondrion membrane. The catalysed reaction is L-galactono-1,4-lactone + 4 Fe(III)-[cytochrome c] = L-dehydroascorbate + 4 Fe(II)-[cytochrome c] + 5 H(+). It carries out the reaction L-gulono-1,4-lactone + 2 Fe(III)-[cytochrome c] = L-ascorbate + 2 Fe(II)-[cytochrome c] + 3 H(+). It participates in cofactor biosynthesis; L-ascorbate biosynthesis. In terms of biological role, involved in the biosynthesis of ascorbate. Catalyzes the final step of ascorbate biosynthesis. Uses L-galactono-1,4-lactone and L-gulono-1,4-lactone as substrates, but not D-galactono-1,4-lactone, D-gulono-1,4-lactone, L-mannono-1,4-lactone or D-galactonic acid. Also active with phenazine methosulfate and 1,4-benzoquinone as electron acceptors. Involved in the regulation of the accumulation of the mitochondrial respiratory complex I. Structural part of one of the plant-specific mitochondrial complex I assembly intermediates, lacking the whole distal (PD) module. Prevents the binding of the plant specific P1 protein (CPN60/HSP60), responsible for the linkage of the proximal (PP) to the distal (PD) module. The polypeptide is L-galactono-1,4-lactone dehydrogenase, mitochondrial (Arabidopsis thaliana (Mouse-ear cress)).